A 286-amino-acid chain; its full sequence is Energy-coupling factor transporter ATP-binding protein EcfA2 (286 aa).

The ABC transporter domain occupies 3 to 246; that stretch reads IRFDNVSYTY…KKKLADWHIG (244 aa). 40-47 contacts ATP; that stretch reads GQTGSGKS.

The protein belongs to the ABC transporter superfamily. Energy-coupling factor EcfA family. As to quaternary structure, forms a stable energy-coupling factor (ECF) transporter complex composed of 2 membrane-embedded substrate-binding proteins (S component), 2 ATP-binding proteins (A component) and 2 transmembrane proteins (T component).

Its subcellular location is the cell membrane. Functionally, ATP-binding (A) component of a common energy-coupling factor (ECF) ABC-transporter complex. Unlike classic ABC transporters this ECF transporter provides the energy necessary to transport a number of different substrates. This is Energy-coupling factor transporter ATP-binding protein EcfA2 from Staphylococcus aureus (strain USA300).